The primary structure comprises 295 residues: Proline-rich protein 32 (295 aa).

Disordered stretches follow at residues 10–48 (GHAP…GHPG) and 101–120 (ATGE…SGQD).

The sequence is that of Proline-rich protein 32 (PRR32) from Bos taurus (Bovine).